Here is a 221-residue protein sequence, read N- to C-terminus: UPF0502 protein CPS_0106 (221 aa).

It belongs to the UPF0502 family.

The protein is UPF0502 protein CPS_0106 of Colwellia psychrerythraea (strain 34H / ATCC BAA-681) (Vibrio psychroerythus).